A 132-amino-acid chain; its full sequence is Iron-sulfur cluster assembly 1 homolog, mitochondrial (132 aa).

Residues 1 to 15 constitute a mitochondrion transit peptide; that stretch reads MASSASSVVRATVRA. Positions 60, 124, and 126 each coordinate Fe cation.

It belongs to the HesB/IscA family. In terms of assembly, homooligomer, forming a rod-shaped structure 24 nm in length that may arise through a double-helical assembly of subunits. Interacts with CRY4; CRY4 seems to be associated with the outside of the rod-shaped homooligomer. Does not interact with CRY1 or CRY2. Detected in retina, especially in the retinal ganglion layer, the inner nuclear layer and the outer nuclear layer. Detected in retina visual pigment cells (at protein level).

It localises to the mitochondrion. In terms of biological role, involved in the maturation of mitochondrial 4Fe-4S proteins functioning late in the iron-sulfur cluster assembly pathway. Probably involved in the binding of an intermediate of Fe/S cluster assembly. Component of a putative magnetoreceptor complex formed by ISCA1 and CRY4, a member of the cryptochrome family that are known to be required for light-dependent magnetosensitivity in various orgnisms. The rod-like assembly may facilitate the perception of the Earth's weak magnetic field. Both ISCA1 and the complex with CRY4 have magnetic properties and are attracted to iron beads. When exposed to a magnetic field of 1 mT (superior to the natural magnetic field), over 50% of the rod-like complexes align more or less in parallel with the magnetic field at room temperature. This Columba livia (Rock dove) protein is Iron-sulfur cluster assembly 1 homolog, mitochondrial (ISCA1).